We begin with the raw amino-acid sequence, 185 residues long: Dihydrofolate reductase (185 aa).

The DHFR domain occupies 5-184; the sequence is KLNLIAAACD…ISYYFRVYKK (180 aa). Residues Ala-11 and 17–23 each bind NADP(+); that span reads GIGVNGA. 31-36 contributes to the substrate binding site; it reads EMAYFT. 55–57 contributes to the NADP(+) binding site; the sequence is RRT. Arg-71 is a binding site for substrate. NADP(+) is bound by residues 77-79 and 117-124; these read THN and GGSSIYRA.

The protein belongs to the dihydrofolate reductase family.

It carries out the reaction (6S)-5,6,7,8-tetrahydrofolate + NADP(+) = 7,8-dihydrofolate + NADPH + H(+). The protein operates within cofactor biosynthesis; tetrahydrofolate biosynthesis; 5,6,7,8-tetrahydrofolate from 7,8-dihydrofolate: step 1/1. Its activity is regulated as follows. Activated by dithiothreitol and p-chloromercuribenzoate. Inhibited by trimethoprim, methotrexate, sodium tetrathionate and hydroxymercuribenzoate. Key enzyme in folate metabolism. Catalyzes an essential reaction for de novo glycine and purine synthesis, and for DNA precursor synthesis. This is Dihydrofolate reductase (DHFR) from Heliothis virescens (Tobacco budworm moth).